We begin with the raw amino-acid sequence, 361 residues long: Histidine biosynthesis bifunctional protein HisB (361 aa).

Residues 1 to 172 (MSQPTLFIDR…PKTTACERPP (172 aa)) form a histidinol-phosphatase region. The active-site Nucleophile is the Asp-9. Residues Asp-9 and Asp-11 each coordinate Mg(2+). The active-site Proton donor is Asp-11. Positions 92, 94, 100, and 102 each coordinate Zn(2+). Residue Asp-129 coordinates Mg(2+). The tract at residues 173-361 (RYAEVVRTTK…NELPSSKGVL (189 aa)) is imidazoleglycerol-phosphate dehydratase.

It in the N-terminal section; belongs to the histidinol-phosphatase family. In the C-terminal section; belongs to the imidazoleglycerol-phosphate dehydratase family. Mg(2+) serves as cofactor. The cofactor is Zn(2+).

The protein localises to the cytoplasm. The catalysed reaction is D-erythro-1-(imidazol-4-yl)glycerol 3-phosphate = 3-(imidazol-4-yl)-2-oxopropyl phosphate + H2O. The enzyme catalyses L-histidinol phosphate + H2O = L-histidinol + phosphate. It functions in the pathway amino-acid biosynthesis; L-histidine biosynthesis; L-histidine from 5-phospho-alpha-D-ribose 1-diphosphate: step 6/9. It participates in amino-acid biosynthesis; L-histidine biosynthesis; L-histidine from 5-phospho-alpha-D-ribose 1-diphosphate: step 8/9. This chain is Histidine biosynthesis bifunctional protein HisB, found in Actinobacillus pleuropneumoniae serotype 7 (strain AP76).